The chain runs to 389 residues: Alpha-2B adrenergic receptor (389 aa).

A helical membrane pass occupies residues 1-25; that stretch reads AIAAVITFLILFTIFGNALVILAVL. Residues 26 to 36 are Cytoplasmic-facing; that stretch reads TSRSLRAPQNL. Residues 37-62 form a helical membrane-spanning segment; it reads FLVSLAAADILVATLIIPFSLANELL. Over 63-72 the chain is Extracellular; sequence GYWYFRRTWC. Cys72 and Cys151 are joined by a disulfide. A helical transmembrane segment spans residues 73–95; the sequence is EVYLALDVLFCTSSIVHLCAISL. The Cytoplasmic segment spans residues 96–117; it reads DRYWAVTRALEYNTKRTPRRIK. A helical transmembrane segment spans residues 118-140; it reads CIILTVWLIAAVISLPPLIYKGD. Over 141-156 the chain is Extracellular; the sequence is QGPQPRGRPQCKLNQE. A helical transmembrane segment spans residues 157–180; sequence AWYILASSIGSFFAPCLIMILVYL. Residues 181–363 lie on the Cytoplasmic side of the membrane; the sequence is RIYLIAKRSH…LTREKRFTFV (183 aa). 2 disordered regions span residues 194–216 and 233–320; these read PRAKGGPGGGGSKQPHPVPAGAS and EANG…PLQQ. Positions 196–205 are enriched in gly residues; the sequence is AKGGPGGGGS. Positions 255–267 are enriched in low complexity; it reads PALPSSWPALPSS. Over residues 280 to 302 the composition is skewed to acidic residues; that stretch reads LEEEAEEEEEEEEEEEEGEEECE. Low complexity predominate over residues 303 to 320; that stretch reads PQALPASPASACSPPLQQ. A helical membrane pass occupies residues 364–387; that stretch reads LAVVIGVFVLCWFPFFFSYSLGAI. At 388-389 the chain is on the extracellular side; sequence CP.

This sequence belongs to the G-protein coupled receptor 1 family. Adrenergic receptor subfamily. ADRA2B sub-subfamily. As to quaternary structure, interacts with RAB26. Interacts with PPP1R9B. Interacts with GGA1, GGA2 and GGA3.

Its subcellular location is the cell membrane. In terms of biological role, alpha-2 adrenergic receptors mediate the catecholamine-induced inhibition of adenylate cyclase through the action of G proteins. In Equus caballus (Horse), this protein is Alpha-2B adrenergic receptor (ADRA2B).